Reading from the N-terminus, the 105-residue chain is Met repressor (105 aa).

Belongs to the MetJ family. Homodimer.

Its subcellular location is the cytoplasm. In terms of biological role, this regulatory protein, when combined with SAM (S-adenosylmethionine) represses the expression of the methionine regulon and of enzymes involved in SAM synthesis. This Vibrio vulnificus (strain CMCP6) protein is Met repressor.